The primary structure comprises 288 residues: Glycine--tRNA ligase alpha subunit (288 aa).

It belongs to the class-II aminoacyl-tRNA synthetase family. As to quaternary structure, tetramer of two alpha and two beta subunits.

It is found in the cytoplasm. The enzyme catalyses tRNA(Gly) + glycine + ATP = glycyl-tRNA(Gly) + AMP + diphosphate. This is Glycine--tRNA ligase alpha subunit from Rickettsia rickettsii (strain Iowa).